The chain runs to 336 residues: N-acetyl-gamma-glutamyl-phosphate reductase (336 aa).

The active site involves cysteine 144.

It belongs to the NAGSA dehydrogenase family. Type 1 subfamily.

It is found in the cytoplasm. It carries out the reaction N-acetyl-L-glutamate 5-semialdehyde + phosphate + NADP(+) = N-acetyl-L-glutamyl 5-phosphate + NADPH + H(+). It participates in amino-acid biosynthesis; L-arginine biosynthesis; N(2)-acetyl-L-ornithine from L-glutamate: step 3/4. Functionally, catalyzes the NADPH-dependent reduction of N-acetyl-5-glutamyl phosphate to yield N-acetyl-L-glutamate 5-semialdehyde. In Methanosarcina acetivorans (strain ATCC 35395 / DSM 2834 / JCM 12185 / C2A), this protein is N-acetyl-gamma-glutamyl-phosphate reductase.